The chain runs to 677 residues: UvrABC system protein B (677 aa).

The 166-residue stretch at 27 to 192 folds into the Helicase ATP-binding domain; the sequence is ANLGQGVRDQ…QRNDFDFHRG (166 aa). 40 to 47 is a binding site for ATP; that stretch reads GVTGSGKT. Positions 93-116 match the Beta-hairpin motif; it reads YYDYYQPEAYVPASDTYIEKDSSI. The 163-residue stretch at 432 to 594 folds into the Helicase C-terminal domain; sequence QVDDLLAECR…IEPRTIRKSL (163 aa). Residues 638–673 enclose the UVR domain; it reads AKHIQKLEREMREAAKELEFERAATLRDRIRLLRER.

It belongs to the UvrB family. In terms of assembly, forms a heterotetramer with UvrA during the search for lesions. Interacts with UvrC in an incision complex.

The protein resides in the cytoplasm. Functionally, the UvrABC repair system catalyzes the recognition and processing of DNA lesions. A damage recognition complex composed of 2 UvrA and 2 UvrB subunits scans DNA for abnormalities. Upon binding of the UvrA(2)B(2) complex to a putative damaged site, the DNA wraps around one UvrB monomer. DNA wrap is dependent on ATP binding by UvrB and probably causes local melting of the DNA helix, facilitating insertion of UvrB beta-hairpin between the DNA strands. Then UvrB probes one DNA strand for the presence of a lesion. If a lesion is found the UvrA subunits dissociate and the UvrB-DNA preincision complex is formed. This complex is subsequently bound by UvrC and the second UvrB is released. If no lesion is found, the DNA wraps around the other UvrB subunit that will check the other stand for damage. The protein is UvrABC system protein B of Nitratidesulfovibrio vulgaris (strain DP4) (Desulfovibrio vulgaris).